Consider the following 270-residue polypeptide: MRRNCCHVSFASTLKILNFVQAFIGVSIIIYSIWMLHEYSRHLPVDPPPSASSSSGTEIATSVSEPLKNPIDFVASIILGSNGGDHGFNLRSLDLPAPWFIYSFMAVGILVCIVTFIGFIAAEAINGCCLCFYSILKTLLILLEAALVAYIAIDRHWEKDLPYDPTGELSSLRAFIEENIDICKWVGIAVVAVQLLSLLLAMVLRAMVSTPKPELDEEEDDENPRSRTWDPLLGPQGNQAPAGSSKIENWSSRIREKYGLNQSPPVNPKG.

At 1–15 the chain is on the cytoplasmic side; sequence MRRNCCHVSFASTLK. A helical transmembrane segment spans residues 16–36; that stretch reads ILNFVQAFIGVSIIIYSIWML. Topologically, residues 37–99 are extracellular; that stretch reads HEYSRHLPVD…LRSLDLPAPW (63 aa). A helical transmembrane segment spans residues 100 to 120; the sequence is FIYSFMAVGILVCIVTFIGFI. Residues 121-132 are Cytoplasmic-facing; the sequence is AAEAINGCCLCF. A helical transmembrane segment spans residues 133–153; sequence YSILKTLLILLEAALVAYIAI. At 154–183 the chain is on the extracellular side; the sequence is DRHWEKDLPYDPTGELSSLRAFIEENIDIC. The chain crosses the membrane as a helical span at residues 184-204; that stretch reads KWVGIAVVAVQLLSLLLAMVL. The Cytoplasmic segment spans residues 205–270; the sequence is RAMVSTPKPE…NQSPPVNPKG (66 aa). Residues 212 to 249 form a disordered region; it reads KPELDEEEDDENPRSRTWDPLLGPQGNQAPAGSSKIEN. Polar residues predominate over residues 236–249; that stretch reads QGNQAPAGSSKIEN. At Ser-245 the chain carries Phosphoserine.

This sequence belongs to the tetraspanin (TM4SF) family. As to quaternary structure, homodimer. Constituent of tobamovirus replication complex. Expressed in rosette leaves.

The protein resides in the membrane. Its subcellular location is the vacuole membrane. In terms of biological role, may be involved in the regulation of cell differentiation. Its function is as follows. Promotes intracellular multiplication of tobamoviruses, probably being a component of the replication complex. In Arabidopsis thaliana (Mouse-ear cress), this protein is Tetraspanin-18 (TOM2AH2).